The sequence spans 975 residues: MDSGDIEEAGGNGEEEFRSGPRLGGSKYRPVVAHDRAVVEMSSIDPGSSSSTLKNIKVVAPGDVGAGVRGPEDGVNGHQKESKLELFGFDSLVNILGLKSMTGEQIQAPSSPRDGEDISITQGHPKPPALKMGTMMGVFVPCLQNILGIIYYIRFTWIVGMAGIGQGLVLVFLCGLCTFLTTISLSAIATNGAMKGGGPYYLIGRALGPEVGISIGLCFFLGNAVAGALYVLGAVETFLKAFPAAGIFRETITKVNGTAVSESIQSPNSHDLQVYGIVVTILLCFIVFGGVKMINRVAPAFLVPVLLSIFCIFIGIFLAKTDDPDNGITGLRLKSFKDNWGSAYQMTNDAGIPDPTGGTYWSFNELVGLFFPAVTGIMAGSNRSASLKDTQKSIPVGTLAATLTTTSLYLISVLFFGAVATRDKLLTDRLLTATIAWPFPAIVHVGIILSTLGAALQSLTGAPRLLAAIANDDILPILNYFKVADTSEPHIATLFTAFICIGCVVIGNLDLITPTVTMFYLLCYSGVNLSCFLLDLLDAPSWRPRWKYHHWSLSFVGASLCIVIMFLISWSFTVVAIALASLIYKYVGLKGKAGDWGDGFKSAYFQLALRSLRSLGANQVHPKNWYPIPLVFCRPWGQLPENVPCHPKLADFANCMKKKGRGMSIFVSILDGDYYECAEEAKEACKQLATYIEYKRCEGVAEIVVAPNMTEGFRGIIQTMGLGNLKPNIVVMRYPEIWRRENLTEIPSTFVGIINDCITANKAVVIIKGLDEWPNEYQRQYGTIDLYWIVRDGGLMLLLSQLLLTKESFESCKIQLFCIAEEDSDAEALKADVKKFLYDLRMHAEVIVVTMKSWDIRSEGNSQEDSLEAFDAAQRRISDYLGEIKRQGSNPLLANGKPMVVNEQQVEKFLYTMLKLNSTILSYSRMAAVVLVSLPPPPLNHPAYFYMEYMDLLVENVPRMLIVRGYHRDVVTLFT.

2 disordered regions span residues 1–29 and 104–124; these read MDSG…SKYR and EQIQ…TQGH. Topologically, residues 1–132 are cytoplasmic; it reads MDSGDIEEAG…GHPKPPALKM (132 aa). Residues 133–153 traverse the membrane as a helical segment; sequence GTMMGVFVPCLQNILGIIYYI. The Extracellular segment spans residues 154–167; sequence RFTWIVGMAGIGQG. A helical membrane pass occupies residues 168 to 188; the sequence is LVLVFLCGLCTFLTTISLSAI. Residues 189–214 are Cytoplasmic-facing; the sequence is ATNGAMKGGGPYYLIGRALGPEVGIS. The helical transmembrane segment at 215 to 235 threads the bilayer; it reads IGLCFFLGNAVAGALYVLGAV. Topologically, residues 236–273 are extracellular; it reads ETFLKAFPAAGIFRETITKVNGTAVSESIQSPNSHDLQ. N-linked (GlcNAc...) asparagine glycosylation occurs at Asn-256. Residues 274-294 form a helical membrane-spanning segment; sequence VYGIVVTILLCFIVFGGVKMI. Residues 295–296 are Cytoplasmic-facing; sequence NR. A helical transmembrane segment spans residues 297–317; the sequence is VAPAFLVPVLLSIFCIFIGIF. At 318-359 the chain is on the extracellular side; the sequence is LAKTDDPDNGITGLRLKSFKDNWGSAYQMTNDAGIPDPTGGT. Residues 360–380 form a helical membrane-spanning segment; the sequence is YWSFNELVGLFFPAVTGIMAG. Topologically, residues 381 to 398 are cytoplasmic; sequence SNRSASLKDTQKSIPVGT. Residues 399–419 form a helical membrane-spanning segment; sequence LAATLTTTSLYLISVLFFGAV. The Extracellular portion of the chain corresponds to 420–434; that stretch reads ATRDKLLTDRLLTAT. The helical transmembrane segment at 435-455 threads the bilayer; the sequence is IAWPFPAIVHVGIILSTLGAA. Residues 456-490 are Cytoplasmic-facing; the sequence is LQSLTGAPRLLAAIANDDILPILNYFKVADTSEPH. A helical transmembrane segment spans residues 491 to 511; it reads IATLFTAFICIGCVVIGNLDL. The Extracellular segment spans residues 512–515; that stretch reads ITPT. Residues 516–536 form a helical membrane-spanning segment; the sequence is VTMFYLLCYSGVNLSCFLLDL. Residues 537 to 544 are Cytoplasmic-facing; that stretch reads LDAPSWRP. Residues 545–565 form a helical membrane-spanning segment; the sequence is RWKYHHWSLSFVGASLCIVIM. At 566 to 571 the chain is on the extracellular side; it reads FLISWS. The helical transmembrane segment at 572 to 592 threads the bilayer; that stretch reads FTVVAIALASLIYKYVGLKGK. Over 593–975 the chain is Cytoplasmic; that stretch reads AGDWGDGFKS…YHRDVVTLFT (383 aa).

This sequence belongs to the SLC12A transporter family. As to expression, expressed in young seedlings cotyledon tips, plant vasculature, root tips and axillary buds. Expressed in root vascular strand in the pericycle and other parenchyma cells bordering xylem vessels. Expressed in the xylem/symplast boundaries of rosette stems, rosette leaves and cauline leaves. Expressed in stipules, trichomes and hydathodes. Expressed in pollen grains.

It localises to the membrane. Cation/chloride cotransporter that mediates potassium-chloride and sodium-chloride cotransports. Involved in plant development and Cl(-) homeostasis. May be involved in long distance Cl(-) transport. Does not function as an H(+)-dependent cotransporter. The chain is Cation-chloride cotransporter 1 (CCC1) from Arabidopsis thaliana (Mouse-ear cress).